We begin with the raw amino-acid sequence, 254 residues long: Phosphoribosylaminoimidazole-succinocarboxamide synthase (254 aa).

It belongs to the SAICAR synthetase family.

It carries out the reaction 5-amino-1-(5-phospho-D-ribosyl)imidazole-4-carboxylate + L-aspartate + ATP = (2S)-2-[5-amino-1-(5-phospho-beta-D-ribosyl)imidazole-4-carboxamido]succinate + ADP + phosphate + 2 H(+). It functions in the pathway purine metabolism; IMP biosynthesis via de novo pathway; 5-amino-1-(5-phospho-D-ribosyl)imidazole-4-carboxamide from 5-amino-1-(5-phospho-D-ribosyl)imidazole-4-carboxylate: step 1/2. This is Phosphoribosylaminoimidazole-succinocarboxamide synthase from Rhizobium meliloti (strain 1021) (Ensifer meliloti).